We begin with the raw amino-acid sequence, 200 residues long: MELQVVGANALAVSETTFGREFNEALIHQVVVAYAAGARQGSRAQKTRAEVSGSGKKPWRQKGTGRARSGDIKSPIWRSGGITFAAKPQDHSQKVNKKMYRGAIKSILSELVRQDRLVVVDKFEIDAPKTKVLVQKLKDLALEDVLIITASLDENLFLAARNLYKVDVRDVQGIDPVSLIAFNKVVVTVDAVKQIEEMLA.

The segment at 43–71 (RAQKTRAEVSGSGKKPWRQKGTGRARSGD) is disordered.

The protein belongs to the universal ribosomal protein uL4 family. As to quaternary structure, part of the 50S ribosomal subunit.

Functionally, one of the primary rRNA binding proteins, this protein initially binds near the 5'-end of the 23S rRNA. It is important during the early stages of 50S assembly. It makes multiple contacts with different domains of the 23S rRNA in the assembled 50S subunit and ribosome. Forms part of the polypeptide exit tunnel. This chain is Large ribosomal subunit protein uL4, found in Mannheimia succiniciproducens (strain KCTC 0769BP / MBEL55E).